Reading from the N-terminus, the 448-residue chain is Glutamyl-tRNA reductase (448 aa).

Residues 49–52 (TCNR), Ser-109, 114–116 (ETQ), and Gln-120 contribute to the substrate site. Catalysis depends on Cys-50, which acts as the Nucleophile. 189-194 (GAGEMS) contributes to the NADP(+) binding site.

This sequence belongs to the glutamyl-tRNA reductase family. Homodimer.

The catalysed reaction is (S)-4-amino-5-oxopentanoate + tRNA(Glu) + NADP(+) = L-glutamyl-tRNA(Glu) + NADPH + H(+). It functions in the pathway porphyrin-containing compound metabolism; protoporphyrin-IX biosynthesis; 5-aminolevulinate from L-glutamyl-tRNA(Glu): step 1/2. Functionally, catalyzes the NADPH-dependent reduction of glutamyl-tRNA(Glu) to glutamate 1-semialdehyde (GSA). The polypeptide is Glutamyl-tRNA reductase (Staphylococcus haemolyticus (strain JCSC1435)).